Here is a 263-residue protein sequence, read N- to C-terminus: Purine nucleoside phosphorylase SERP0752 (263 aa).

3 residues coordinate Zn(2+): His79, Cys124, and His141.

The protein belongs to the purine nucleoside phosphorylase YfiH/LACC1 family. As to quaternary structure, homodimer. It depends on Cu(2+) as a cofactor. The cofactor is Zn(2+).

It catalyses the reaction adenosine + phosphate = alpha-D-ribose 1-phosphate + adenine. It carries out the reaction S-methyl-5'-thioadenosine + phosphate = 5-(methylsulfanyl)-alpha-D-ribose 1-phosphate + adenine. The catalysed reaction is inosine + phosphate = alpha-D-ribose 1-phosphate + hypoxanthine. The enzyme catalyses adenosine + H2O + H(+) = inosine + NH4(+). In terms of biological role, purine nucleoside enzyme that catalyzes the phosphorolysis of adenosine and inosine nucleosides, yielding D-ribose 1-phosphate and the respective free bases, adenine and hypoxanthine. Also catalyzes the phosphorolysis of S-methyl-5'-thioadenosine into adenine and S-methyl-5-thio-alpha-D-ribose 1-phosphate. Also has adenosine deaminase activity. This Staphylococcus epidermidis (strain ATCC 35984 / DSM 28319 / BCRC 17069 / CCUG 31568 / BM 3577 / RP62A) protein is Purine nucleoside phosphorylase SERP0752.